Reading from the N-terminus, the 425-residue chain is uncharacterized protein (425 aa).

Positions 1-57 constitute a TRAM domain; that stretch reads MKDKPLKLTVEKLVYGGYGFSRLNGKAVFVRFASPKELVEAKVVKEKKDYTEAVVTK. The [4Fe-4S] cluster site is built by C70, C76, C79, and C153. 3 residues coordinate S-adenosyl-L-methionine: Q260, D308, and D354. C381 functions as the Nucleophile in the catalytic mechanism.

Belongs to the class I-like SAM-binding methyltransferase superfamily. RNA M5U methyltransferase family.

This is an uncharacterized protein from Aquifex aeolicus (strain VF5).